Here is a 444-residue protein sequence, read N- to C-terminus: Tryptophan 5-hydroxylase 1 (444 aa).

The region spanning 19–94 is the ACT domain; the sequence is SLIFSLKNEV…NVLSVNLPDN (76 aa). Residue S58 is modified to Phosphoserine; by PKA. Residues Y235, R257, and T265 each coordinate L-tryptophan. Positions 272, 277, and 317 each coordinate Fe cation. 2 residues coordinate L-tryptophan: S336 and I366.

This sequence belongs to the biopterin-dependent aromatic amino acid hydroxylase family. In terms of assembly, homotetramer. Interacts with DNAJC12. Requires Fe(2+) as cofactor. In terms of processing, ubiquitinated, leading to its degradation by the proteasome. Ubiquitinated is triggered by phosphorylation. Post-translationally, phosphorylated; triggering degradation by the proteasome. Seems to be less widely expressed than isoform 1.

The catalysed reaction is (6R)-L-erythro-5,6,7,8-tetrahydrobiopterin + L-tryptophan + O2 = 5-hydroxy-L-tryptophan + (4aS,6R)-4a-hydroxy-L-erythro-5,6,7,8-tetrahydrobiopterin. It participates in aromatic compound metabolism; serotonin biosynthesis; serotonin from L-tryptophan: step 1/2. Its function is as follows. Oxidizes L-tryptophan to 5-hydroxy-l-tryptophan in the rate-determining step of serotonin biosynthesis. In Homo sapiens (Human), this protein is Tryptophan 5-hydroxylase 1 (TPH1).